The following is a 285-amino-acid chain: Probable adenylate kinase 6, chloroplastic (285 aa).

The transit peptide at 1-33 directs the protein to the chloroplast; the sequence is MAAISRAIRACAAAGSRRSMASSAKEVAAAGAR. An ATP-binding site is contributed by 63–68; that stretch reads GVGKGT. The segment at 83–112 is NMP; sequence ATGDLVRDALASPGPFSEQLAEIVNNGKLV. Residues threonine 84, arginine 89, 110–112, 140–143, and glutamine 147 contribute to the AMP site; these read KLV and GFPR. Positions 176 to 224 are LID; it reads GRRMCSQCGGNFNVASIDMEGENGGPRMYMPPLLPPPQCESKLITRPDD. Residues arginine 177 and 186-187 contribute to the ATP site; that span reads NF. AMP is bound by residues arginine 221 and arginine 232.

Belongs to the adenylate kinase family.

It is found in the plastid. The protein localises to the chloroplast. It carries out the reaction AMP + ATP = 2 ADP. In terms of biological role, catalyzes the reversible transfer of the terminal phosphate group between ATP and AMP. Plays an important role in cellular energy homeostasis and in adenine nucleotide metabolism. This chain is Probable adenylate kinase 6, chloroplastic, found in Oryza sativa subsp. japonica (Rice).